We begin with the raw amino-acid sequence, 221 residues long: Transmembrane protein 225B (221 aa).

4 membrane-spanning segments follow: residues 14 to 34 (WAIV…VSIF), 77 to 97 (VFLL…MPFA), 109 to 129 (FVLA…LVLH), and 147 to 167 (VLWP…AGTI).

It is found in the membrane. The chain is Transmembrane protein 225B from Homo sapiens (Human).